A 319-amino-acid chain; its full sequence is Acetyl-coenzyme A carboxylase carboxyl transferase subunit alpha (319 aa).

Residues 35-296 (NIDEEVHRLR…KAQLLADLAD (262 aa)) enclose the CoA carboxyltransferase C-terminal domain.

It belongs to the AccA family. Acetyl-CoA carboxylase is a heterohexamer composed of biotin carboxyl carrier protein (AccB), biotin carboxylase (AccC) and two subunits each of ACCase subunit alpha (AccA) and ACCase subunit beta (AccD).

It is found in the cytoplasm. It carries out the reaction N(6)-carboxybiotinyl-L-lysyl-[protein] + acetyl-CoA = N(6)-biotinyl-L-lysyl-[protein] + malonyl-CoA. It functions in the pathway lipid metabolism; malonyl-CoA biosynthesis; malonyl-CoA from acetyl-CoA: step 1/1. Functionally, component of the acetyl coenzyme A carboxylase (ACC) complex. First, biotin carboxylase catalyzes the carboxylation of biotin on its carrier protein (BCCP) and then the CO(2) group is transferred by the carboxyltransferase to acetyl-CoA to form malonyl-CoA. The polypeptide is Acetyl-coenzyme A carboxylase carboxyl transferase subunit alpha (Escherichia coli O139:H28 (strain E24377A / ETEC)).